The sequence spans 135 residues: Histone H3.3C (135 aa).

A disordered region spans residues methionine 1–tyrosine 41. Arginine 3 bears the Asymmetric dimethylarginine; by PRMT6; alternate mark. A Citrulline; alternate modification is found at arginine 3. A Phosphothreonine; by HASPIN modification is found at threonine 4. The residue at position 5 (lysine 5) is an Allysine; alternate. N6,N6,N6-trimethyllysine; alternate is present on lysine 5. N6,N6-dimethyllysine; alternate is present on lysine 5. The residue at position 5 (lysine 5) is an N6-(2-hydroxyisobutyryl)lysine; alternate. N6-(beta-hydroxybutyryl)lysine; alternate is present on lysine 5. At lysine 5 the chain carries N6-acetyllysine; alternate. An N6-methyllysine; alternate modification is found at lysine 5. Position 6 is a 5-glutamyl dopamine; alternate (glutamine 6). Glutamine 6 is subject to 5-glutamyl serotonin; alternate. Threonine 7 carries the post-translational modification Phosphothreonine; by PKC. A Citrulline; alternate modification is found at arginine 9. The residue at position 9 (arginine 9) is a Symmetric dimethylarginine; by PRMT5; alternate. An N6,N6,N6-trimethyllysine; alternate modification is found at lysine 10. An N6,N6-dimethyllysine; alternate modification is found at lysine 10. At lysine 10 the chain carries N6-(2-hydroxyisobutyryl)lysine; alternate. Lysine 10 bears the N6-(beta-hydroxybutyryl)lysine; alternate mark. Residue lysine 10 is modified to N6-acetyllysine; alternate. Position 10 is an N6-methyllysine; alternate (lysine 10). Lysine 10 carries the N6-lactoyllysine; alternate modification. The residue at position 11 (serine 11) is an ADP-ribosylserine; alternate. The residue at position 11 (serine 11) is a Phosphoserine; alternate; by AURKB, AURKC, RPS6KA3, RPS6KA4 and RPS6KA5. Threonine 12 carries the post-translational modification Phosphothreonine; by PKC. Lysine 15 carries the post-translational modification N6-(2-hydroxyisobutyryl)lysine; alternate. The residue at position 15 (lysine 15) is an N6-(beta-hydroxybutyryl)lysine; alternate. The residue at position 15 (lysine 15) is an N6-acetyllysine; alternate. Lysine 15 bears the N6-lactoyllysine; alternate mark. Lysine 15 is modified (N6-glutaryllysine; alternate). An N6-succinyllysine; alternate modification is found at lysine 15. The residue at position 18 (arginine 18) is a Citrulline; alternate. An Asymmetric dimethylarginine; by CARM1; alternate modification is found at arginine 18. 2 positions are modified to N6-(2-hydroxyisobutyryl)lysine; alternate: lysine 19 and lysine 24. Lysine 19 and lysine 24 each carry N6-(beta-hydroxybutyryl)lysine; alternate. Lysine 19 and lysine 24 each carry N6-acetyllysine; alternate. Lysine 19 and lysine 24 each carry N6-methyllysine; alternate. Residues lysine 19 and lysine 24 each carry the N6-lactoyllysine; alternate modification. Residues lysine 19 and lysine 24 each carry the N6-glutaryllysine; alternate modification. N6-butyryllysine; alternate occurs at positions 19 and 24. Position 27 is a citrulline (arginine 27). Lysine 28 is subject to N6,N6,N6-trimethyllysine; alternate. Lysine 28 carries the post-translational modification N6,N6-dimethyllysine; alternate. Residue lysine 28 is modified to N6-(2-hydroxyisobutyryl)lysine; alternate. Lysine 28 is subject to N6-acetyllysine; alternate. Lysine 28 bears the N6-methyllysine; alternate mark. N6-lactoyllysine; alternate is present on lysine 28. Residue lysine 28 is modified to N6-glutaryllysine; alternate. Serine 29 bears the ADP-ribosylserine; alternate mark. Position 29 is a phosphoserine; alternate; by AURKB, AURKC and RPS6KA5 (serine 29). Serine 32 is subject to Phosphoserine. Residue lysine 37 is modified to N6-methyllysine. Phosphotyrosine is present on tyrosine 41. An N6,N6,N6-trimethyllysine; alternate modification is found at lysine 56. An N6-(2-hydroxyisobutyryl)lysine; alternate modification is found at lysine 56. The residue at position 56 (lysine 56) is an N6-(beta-hydroxybutyryl)lysine; alternate. Lysine 56 is subject to N6-acetyllysine; alternate. Residue lysine 56 is modified to N6-lactoyllysine; alternate. Lysine 56 bears the N6-glutaryllysine; alternate mark. Residue lysine 56 is modified to N6-succinyllysine; alternate. Lysine 56 is subject to N6-methyllysine; by EHMT2; alternate. The residue at position 57 (serine 57) is a Phosphoserine. An N6-(2-hydroxyisobutyryl)lysine; alternate modification is found at lysine 64. Lysine 64 bears the N6-methyllysine; alternate mark. Residue threonine 80 is modified to Phosphothreonine. A Phosphoserine modification is found at serine 86. Threonine 107 is modified (phosphothreonine). N6-glutaryllysine; alternate is present on residues lysine 115 and lysine 122. Lysine 115 carries the post-translational modification N6-acetyllysine. Lysine 122 is subject to N6-(2-hydroxyisobutyryl)lysine; alternate. Lysine 122 carries the N6-acetyllysine; alternate modification. At lysine 122 the chain carries N6-methyllysine; alternate. Residue lysine 122 is modified to N6-succinyllysine; alternate.

This sequence belongs to the histone H3 family. The nucleosome is a histone octamer containing two molecules each of H2A, H2B, H3 and H4 assembled in one H3-H4 heterotetramer and two H2A-H2B heterodimers. The octamer wraps approximately 147 bp of DNA. Acetylation is generally linked to gene activation. Acetylation on Lys-10 (H3K9ac) impairs methylation at Arg-9 (H3R8me2s). Acetylation on Lys-19 (H3K18ac) and Lys-24 (H3K24ac) favors methylation at Arg-18 (H3R17me). Acetylation at Lys-122 (H3K122ac) by EP300/p300 plays a central role in chromatin structure: localizes at the surface of the histone octamer and stimulates transcription, possibly by promoting nucleosome instability. In terms of processing, citrullination at Arg-9 (H3R8ci) and/or Arg-18 (H3R17ci) by PADI4 impairs methylation and represses transcription. Post-translationally, asymmetric dimethylation at Arg-18 (H3R17me2a) by CARM1 is linked to gene activation. Symmetric dimethylation at Arg-9 (H3R8me2s) by PRMT5 is linked to gene repression. Asymmetric dimethylation at Arg-3 (H3R2me2a) by PRMT6 is linked to gene repression and is mutually exclusive with H3 Lys-5 methylation (H3K4me2 and H3K4me3). H3R2me2a is present at the 3' of genes regardless of their transcription state and is enriched on inactive promoters, while it is absent on active promoters. Methylation at Lys-5 (H3K4me) is linked to gene activation. Methylation at Lys-5 (H3K4me) facilitates subsequent acetylation of H3 and H4. Methylation at Lys-10 (H3K9me) and Lys-28 (H3K27me) are linked to gene repression. Methylation at Lys-10 (H3K9me) is a specific target for HP1 proteins (CBX1, CBX3 and CBX5) and prevents subsequent phosphorylation at Ser-11 (H3S10ph) and acetylation of H3 and H4. Methylation at Lys-5 (H3K4me) requires preliminary monoubiquitination of H2B at 'Lys-120'. Methylation at Lys-10 (H3K9me) and Lys-28 (H3K27me) are enriched in inactive X chromosome chromatin. Monomethylation at Lys-56 (H3K56me1) by EHMT2/G9A in G1 phase promotes interaction with PCNA and is required for DNA replication. In terms of processing, phosphorylated at Thr-4 (H3T3ph) by HASPIN during prophase and dephosphorylated during anaphase. Phosphorylation at Ser-11 (H3S10ph) by AURKB is crucial for chromosome condensation and cell-cycle progression during mitosis and meiosis. In addition phosphorylation at Ser-11 (H3S10ph) by RPS6KA4 and RPS6KA5 is important during interphase because it enables the transcription of genes following external stimulation, like mitogens, stress, growth factors or UV irradiation and result in the activation of genes, such as c-fos and c-jun. Phosphorylation at Ser-11 (H3S10ph), which is linked to gene activation, prevents methylation at Lys-10 (H3K9me) but facilitates acetylation of H3 and H4. Phosphorylation at Ser-11 (H3S10ph) by AURKB mediates the dissociation of HP1 proteins (CBX1, CBX3 and CBX5) from heterochromatin. Phosphorylation at Ser-11 (H3S10ph) is also an essential regulatory mechanism for neoplastic cell transformation. Phosphorylated at Ser-29 (H3S28ph) by MAP3K20 isoform 1, RPS6KA5 or AURKB during mitosis or upon ultraviolet B irradiation. Phosphorylation at Thr-7 (H3T6ph) by PRKCB is a specific tag for epigenetic transcriptional activation that prevents demethylation of Lys-5 (H3K4me) by LSD1/KDM1A. At centromeres, specifically phosphorylated at Thr-12 (H3T11ph) from prophase to early anaphase, by DAPK3 and PKN1. Phosphorylation at Thr-12 (H3T11ph) by PKN1 or isoform M2 of PKM (PKM2) is a specific tag for epigenetic transcriptional activation that promotes demethylation of Lys-10 (H3K9me) by KDM4C/JMJD2C. Phosphorylation at Tyr-41 (H3Y41ph) by JAK2 promotes exclusion of CBX5 (HP1 alpha) from chromatin. Post-translationally, lysine deamination at Lys-5 (H3K4all) to form allysine is mediated by LOXL2. Allysine formation by LOXL2 only takes place on H3K4me3 and results in gene repression. Butyrylation of histones marks active promoters and competes with histone acetylation. It is present during late spermatogenesis. In terms of processing, succinylated. Desuccinylation at Lys-122 (H3K122succ) by SIRT7 in response to DNA damage promotes chromatin condensation and double-strand breaks (DSBs) repair. Post-translationally, serine ADP-ribosylation constitutes the primary form of ADP-ribosylation of proteins in response to DNA damage. Serine ADP-ribosylation at Ser-11 (H3S10ADPr) is mutually exclusive with phosphorylation at Ser-11 (H3S10ph) and impairs acetylation at Lys-10 (H3K9ac). Specifically expressed in the seminiferous tubules of testis.

It is found in the nucleus. Its subcellular location is the chromosome. Core component of nucleosome. Nucleosomes wrap and compact DNA into chromatin, limiting DNA accessibility to the cellular machineries which require DNA as a template. Histones thereby play a central role in transcription regulation, DNA repair, DNA replication and chromosomal stability. DNA accessibility is regulated via a complex set of post-translational modifications of histones, also called histone code, and nucleosome remodeling. Hominid-specific H3.5/H3F3C preferentially colocalizes with euchromatin, and it is associated with actively transcribed genes. This Homo sapiens (Human) protein is Histone H3.3C.